Consider the following 78-residue polypeptide: Large ribosomal subunit protein bL28 (78 aa).

The disordered stretch occupies residues 1 to 24; the sequence is MSQVCQVTGKRPVTGNNVSHSQRK.

Belongs to the bacterial ribosomal protein bL28 family.

This Chromohalobacter salexigens (strain ATCC BAA-138 / DSM 3043 / CIP 106854 / NCIMB 13768 / 1H11) protein is Large ribosomal subunit protein bL28.